The primary structure comprises 104 residues: L-rhamnose mutarotase (104 aa).

Position 18 (tyrosine 18) interacts with substrate. Residue histidine 22 is the Proton donor of the active site. Substrate is bound by residues tyrosine 41 and 76–77; that span reads WW.

The protein belongs to the rhamnose mutarotase family. In terms of assembly, homodimer.

The protein resides in the cytoplasm. The catalysed reaction is alpha-L-rhamnose = beta-L-rhamnose. It functions in the pathway carbohydrate metabolism; L-rhamnose metabolism. Functionally, involved in the anomeric conversion of L-rhamnose. The chain is L-rhamnose mutarotase from Escherichia fergusonii (strain ATCC 35469 / DSM 13698 / CCUG 18766 / IAM 14443 / JCM 21226 / LMG 7866 / NBRC 102419 / NCTC 12128 / CDC 0568-73).